A 758-amino-acid chain; its full sequence is Protein SPT21 (758 aa).

Disordered stretches follow at residues 251–271, 372–414, 438–471, and 624–651; these read NNTN…APKA, ININ…AGCR, GIEG…SITS, and VIDS…SDNN. Over residues 395 to 408 the composition is skewed to low complexity; it reads VKVKNSNSKNSAKS. Ser454 is modified (phosphoserine). The segment covering 626–651 has biased composition (polar residues); it reads DSDNTKPQAGLINFSTPADQPASDNN.

Its function is as follows. Required for normal transcription at a number of loci in yeast. The protein is Protein SPT21 (SPT21) of Saccharomyces cerevisiae (strain ATCC 204508 / S288c) (Baker's yeast).